Consider the following 267-residue polypeptide: Putative carboxymethylenebutenolidase (267 aa).

Catalysis depends on residues C137, D194, and H226.

Belongs to the dienelactone hydrolase family.

The enzyme catalyses 2-(5-oxo-2,5-dihydrofuran-2-ylidene)acetate + H2O = 4-oxohex-2-enedioate + H(+). This is Putative carboxymethylenebutenolidase from Yersinia pestis.